Here is a 565-residue protein sequence, read N- to C-terminus: Phosphomethylpyrimidine synthase (565 aa).

Substrate-binding positions include N201, M230, Y259, H295, 315 to 317 (SRG), 356 to 359 (DGLR), and E395. A Zn(2+)-binding site is contributed by H399. Residue Y422 participates in substrate binding. H463 contributes to the Zn(2+) binding site. Residues C543, C546, and C551 each contribute to the [4Fe-4S] cluster site.

Belongs to the ThiC family. In terms of assembly, homodimer. The cofactor is [4Fe-4S] cluster.

The enzyme catalyses 5-amino-1-(5-phospho-beta-D-ribosyl)imidazole + S-adenosyl-L-methionine = 4-amino-2-methyl-5-(phosphooxymethyl)pyrimidine + CO + 5'-deoxyadenosine + formate + L-methionine + 3 H(+). It participates in cofactor biosynthesis; thiamine diphosphate biosynthesis. In terms of biological role, catalyzes the synthesis of the hydroxymethylpyrimidine phosphate (HMP-P) moiety of thiamine from aminoimidazole ribotide (AIR) in a radical S-adenosyl-L-methionine (SAM)-dependent reaction. This is Phosphomethylpyrimidine synthase from Ehrlichia canis (strain Jake).